Here is a 354-residue protein sequence, read N- to C-terminus: Uroporphyrinogen decarboxylase (354 aa).

Substrate is bound by residues 27–31 (RQAGR), D77, Y154, S209, and H327.

It belongs to the uroporphyrinogen decarboxylase family. As to quaternary structure, homodimer.

The protein localises to the cytoplasm. It catalyses the reaction uroporphyrinogen III + 4 H(+) = coproporphyrinogen III + 4 CO2. It participates in porphyrin-containing compound metabolism; protoporphyrin-IX biosynthesis; coproporphyrinogen-III from 5-aminolevulinate: step 4/4. Catalyzes the decarboxylation of four acetate groups of uroporphyrinogen-III to yield coproporphyrinogen-III. The polypeptide is Uroporphyrinogen decarboxylase (Shewanella baltica (strain OS185)).